A 529-amino-acid polypeptide reads, in one-letter code: Bifunctional purine biosynthesis protein PurH (529 aa).

The region spanning 2-149 (TDLSPVRRAL…KNHAFVNVVV (148 aa)) is the MGS-like domain.

This sequence belongs to the PurH family.

The catalysed reaction is (6R)-10-formyltetrahydrofolate + 5-amino-1-(5-phospho-beta-D-ribosyl)imidazole-4-carboxamide = 5-formamido-1-(5-phospho-D-ribosyl)imidazole-4-carboxamide + (6S)-5,6,7,8-tetrahydrofolate. The enzyme catalyses IMP + H2O = 5-formamido-1-(5-phospho-D-ribosyl)imidazole-4-carboxamide. It participates in purine metabolism; IMP biosynthesis via de novo pathway; 5-formamido-1-(5-phospho-D-ribosyl)imidazole-4-carboxamide from 5-amino-1-(5-phospho-D-ribosyl)imidazole-4-carboxamide (10-formyl THF route): step 1/1. It functions in the pathway purine metabolism; IMP biosynthesis via de novo pathway; IMP from 5-formamido-1-(5-phospho-D-ribosyl)imidazole-4-carboxamide: step 1/1. The chain is Bifunctional purine biosynthesis protein PurH from Ruegeria pomeroyi (strain ATCC 700808 / DSM 15171 / DSS-3) (Silicibacter pomeroyi).